Reading from the N-terminus, the 972-residue chain is DNA topoisomerase 1 (972 aa).

Disordered stretches follow at residues 1-210 and 300-416; these read MSGD…VFVK and HEQS…RQKA. The segment covering 11–31 has biased composition (polar residues); sequence IHIQNGGSCEVVQSNGVTTNG. Positions 32 to 50 are enriched in basic residues; sequence HGHHHHHHSSSSSSSKHKS. 3 stretches are compositionally biased toward basic and acidic residues: residues 51–65, 72–86, and 93–103; these read SSKDKHRDREREHKS, SKEHKSSSRDKDRHK, and KHRDKDKERDG. Residues 104–114 show a composition bias toward low complexity; that stretch reads SSNSHRSGSSS. Residues 125–138 show a composition bias toward basic residues; it reads SKHKSSSGHHKRSS. Residues 139-151 are compositionally biased toward basic and acidic residues; the sequence is KDKERRDKDKDRG. Low complexity predominate over residues 173–183; sequence SHKSSSSSSSS. Residue Ser-303 is modified to Phosphoserine. At Tyr-304 the chain carries Phosphotyrosine. The segment covering 316-330 has biased composition (acidic residues); the sequence is HDDDADEMNDDEEDV. Interaction with DNA stretches follow at residues 648–649, 711–716, and 807–809; these read KY, RAGNEK, and TAK. One can recognise a Topo IB-type catalytic domain in the interval 655 to 972; it reads SSKLKGEKDH…VHMADENYRF (318 aa). Tyr-930 serves as the catalytic O-(3'-phospho-DNA)-tyrosine intermediate.

This sequence belongs to the type IB topoisomerase family. In terms of assembly, interacts with Topors.

The protein resides in the nucleus. The protein localises to the cytoplasm. The enzyme catalyses ATP-independent breakage of single-stranded DNA, followed by passage and rejoining.. In terms of biological role, releases the supercoiling and torsional tension of DNA introduced during the DNA replication and transcription by transiently cleaving and rejoining one strand of the DNA duplex. Introduces a single-strand break via transesterification at a target site in duplex DNA. The scissile phosphodiester is attacked by the catalytic tyrosine of the enzyme, resulting in the formation of a DNA-(3'-phosphotyrosyl)-enzyme intermediate and the expulsion of a 5'-OH DNA strand. The free DNA strand then undergoes passage around the unbroken strand thus removing DNA supercoils. Finally, in the religation step, the DNA 5'-OH attacks the covalent intermediate to expel the active-site tyrosine and restore the DNA phosphodiester backbone. This Drosophila melanogaster (Fruit fly) protein is DNA topoisomerase 1.